Here is a 249-residue protein sequence, read N- to C-terminus: ATP-dependent Clp protease proteolytic subunit (249 aa).

Ser-107 functions as the Nucleophile in the catalytic mechanism. His-132 is a catalytic residue. Residues 212-249 (ESASQDNSLDPDAPDESASQDNSLDPDAPDETRPPKLR) form a disordered region.

It belongs to the peptidase S14 family. Component of the chloroplastic Clp protease core complex.

The protein resides in the plastid. The protein localises to the chloroplast stroma. It carries out the reaction Hydrolysis of proteins to small peptides in the presence of ATP and magnesium. alpha-casein is the usual test substrate. In the absence of ATP, only oligopeptides shorter than five residues are hydrolyzed (such as succinyl-Leu-Tyr-|-NHMec, and Leu-Tyr-Leu-|-Tyr-Trp, in which cleavage of the -Tyr-|-Leu- and -Tyr-|-Trp bonds also occurs).. Cleaves peptides in various proteins in a process that requires ATP hydrolysis. Has a chymotrypsin-like activity. Plays a major role in the degradation of misfolded proteins. The polypeptide is ATP-dependent Clp protease proteolytic subunit (Oenothera elata subsp. hookeri (Hooker's evening primrose)).